The following is a 473-amino-acid chain: Glucose facilitated diffusion protein (473 aa).

The Cytoplasmic segment spans residues 1–13; sequence MSSESSQGLVTRL. A helical transmembrane segment spans residues 14–34; that stretch reads ALIAAIGGLLFGYDSAVIAAI. At 35–59 the chain is on the periplasmic side; that stretch reads GTPVDIHFIAPRHLSATAAASLSGM. Residues 60–80 form a helical membrane-spanning segment; it reads VVVAVLVGCVTGSLLSGWIGI. The Cytoplasmic segment spans residues 81-85; that stretch reads RFGRR. Residues 86–106 traverse the membrane as a helical segment; it reads GGLLMSSICFVAAGFGAALTE. Residues 107 to 112 lie on the Periplasmic side of the membrane; sequence KLFGTG. The helical transmembrane segment at 113–133 threads the bilayer; that stretch reads GSALQIFCFFRFLAGLGIGVV. Residues 134–158 are Cytoplasmic-facing; the sequence is STLTPTYIAEIAPPDKRGQMVSGQQ. A helical transmembrane segment spans residues 159–179; sequence MAIVTGALTGYIFTWLLAHFG. The Periplasmic segment spans residues 180–187; the sequence is SIDWVNAS. The chain crosses the membrane as a helical span at residues 188–208; that stretch reads GWCWSPASEGLIGIAFLLLLL. Topologically, residues 209 to 257 are cytoplasmic; sequence TAPDTPHWLVMKGRHSEASKILARLEPQADPNLTIQKIKAGFDKAMDKS. A helical membrane pass occupies residues 258 to 278; it reads SAGLFAFGITVVFAGVSVAAF. Residues 279–303 lie on the Periplasmic side of the membrane; sequence QQLVGINAVLYYAPQMFQNLGFGAD. The chain crosses the membrane as a helical span at residues 304–324; that stretch reads TALLQTISIGVVNFIFTMIAS. The Cytoplasmic portion of the chain corresponds to 325 to 335; sequence RVVDRFGRKPL. The helical transmembrane segment at 336–356 threads the bilayer; it reads LIWGALGMAAMMAVLGCCFWF. At 357–366 the chain is on the periplasmic side; the sequence is KVGGVLPLAS. The helical transmembrane segment at 367–387 threads the bilayer; that stretch reads VLLYIAVFGMSWGPVCWVVLS. At 388-396 the chain is on the cytoplasmic side; that stretch reads EMFPSSIKG. A helical membrane pass occupies residues 397 to 417; the sequence is AAMPIAVTGQWLANILVNFLF. Residues 418–429 are Periplasmic-facing; that stretch reads KVADGSPALNQT. Residues 430-450 form a helical membrane-spanning segment; sequence FNHGFSYLVFAALSILGGLIV. Over 451–473 the chain is Cytoplasmic; the sequence is ARFVPETKGRSLDEIEEMWRSQK.

The protein belongs to the major facilitator superfamily. Sugar transporter (TC 2.A.1.1) family.

The protein localises to the cell inner membrane. Its function is as follows. Allows uptake of glucose by the cell; allows growth on glucose minimal medium by E.coli cells impaired in glucose transport. Also transports fructose, but has a strong preference for glucose. The polypeptide is Glucose facilitated diffusion protein (Zymomonas mobilis subsp. mobilis (strain ATCC 31821 / ZM4 / CP4)).